The chain runs to 285 residues: MSTVATSPGLSSFFSGKPLRFIAASILLVNGLFPAIWILFTSLKTEAELTVKPITWFPHAPTLANYMQAFSDQPLHLFLFNSFMVALLSTALTILISVLAAYALARLNLKYRALILSLIIAVSTFPLVTLLVPLFEIMRALNLLNSWTALILPYTVLSLPVCTLMLVSFFESIPRDLENAAMIDGCTRIGALFKVVVPLCAPGVFTAGILAFVNAWDEFLLALSFNSNPALRTLPVGIQLYQGEFAFPWPVISAALVVGIVPVAILIVIFQERVVSGLTAGGLKG.

6 helical membrane-spanning segments follow: residues 21–41, 83–103, 115–135, 150–170, 195–215, and 250–270; these read FIAA…ILFT, FMVA…AAYA, ILSL…VPLF, LILP…VSFF, VVVP…FVNA, and PVIS…IVIF. An ABC transmembrane type-1 domain is found at 79–270; sequence LFNSFMVALL…VPVAILIVIF (192 aa).

The protein belongs to the binding-protein-dependent transport system permease family. In terms of assembly, the complex is probably composed of two ATP-binding proteins (SmoE), two transmembrane proteins (SmoG and SmoH) and a solute-binding protein (SmoF).

It is found in the cell inner membrane. Functionally, part of the ABC transporter complex SmoEFGH involved in sulfoquinovosyl glycerol (SQGro) uptake. Responsible for the translocation of the substrate across the membrane. This chain is Sulfoquinovosyl glycerol transport system permease protein SmoH, found in Agrobacterium fabrum (strain C58 / ATCC 33970) (Agrobacterium tumefaciens (strain C58)).